Consider the following 253-residue polypeptide: MARMVRRNRKIVNYSEFGDFEDGDEDFACIAAPLTKKSRTQPKEPKKENKKKQKTQKEFTSSQKQSPIGRTSLDDSFCERDLNVTLALSIKEKSANILEVQNSKEQGQVLDDDIPRNGCRQWTAASKAFSHQKLLTIDSCDREHVTDSEPVTIPDEESEEDSDYREGNDEDCAMEKMKINGMKKKIKRQTRKEKKTPKSENNTTVMELKSEQTQKMMSTSSEPVGRPLYTSSPVTNKKPKWVPPGRACAVSFL.

Positions 32 to 51 are interaction with DNA; it reads APLTKKSRTQPKEPKKENKK. Disordered regions lie at residues 33–74, 141–169, and 184–244; these read PLTK…TSLD, DREH…EGND, and KKIK…WVPP. Over residues 154 to 169 the composition is skewed to acidic residues; it reads PDEESEEDSDYREGND. Basic residues predominate over residues 184-195; sequence KKIKRQTRKEKK. Residues 190-241 are interaction with DNA; sequence TRKEKKTPKSENNTTVMELKSEQTQKMMSTSSEPVGRPLYTSSPVTNKKPKW. Over residues 199 to 222 the composition is skewed to polar residues; that stretch reads SENNTTVMELKSEQTQKMMSTSSE.

Monomer.

Its subcellular location is the chromosome. The protein resides in the nucleus. Its function is as follows. Structure-specific DNA-binding protein involved in DNA repair by promoting RAD51-mediated homologous recombination. Acts by stimulating D-Loop formation by RAD51: specifically enhances joint molecule formation through its structure-specific DNA interaction and its interaction with RAD51. Binds single-stranded DNA (ssDNA), double-stranded DNA (dsDNA) and secondary DNA structures, such as D-loop structures: has a strong preference for branched-DNA structures that are obligatory intermediates during joint molecule formation. Involved in mitotic recombination-dependent replication fork processing. Also involved in meiosis by promoting DMC1-mediated homologous meiotic recombination. In Gallus gallus (Chicken), this protein is RAD51-associated protein 1.